We begin with the raw amino-acid sequence, 278 residues long: Nudix hydrolase 2 (278 aa).

The Nudix hydrolase domain occupies 110–242 (SHRVGIGAFV…ELLRYMTDIC (133 aa)). The short motif at 147-168 (GVVNEGEDIHDGSVREVKEETG) is the Nudix box element. Glu-162 lines the Mg(2+) pocket. Glu-165 (proton acceptor) is an active-site residue. Position 166 (Glu-166) interacts with Mg(2+).

It belongs to the Nudix hydrolase family. Mg(2+) serves as cofactor. Requires Mn(2+) as cofactor. As to expression, expressed in roots, stems and leaves.

It carries out the reaction ADP-D-ribose + H2O = D-ribose 5-phosphate + AMP + 2 H(+). The enzyme catalyses NAD(+) + H2O = beta-nicotinamide D-ribonucleotide + AMP + 2 H(+). The catalysed reaction is NADH + H2O = reduced beta-nicotinamide D-ribonucleotide + AMP + 2 H(+). Its function is as follows. Probably mediates the hydrolysis of some nucleoside diphosphate derivatives. In vitro, it can use both NADH and ADP-ribose as substrates; however the relevance of such substrates in vivo is unclear. Confers tolerance to oxidative stress. This is Nudix hydrolase 2 from Arabidopsis thaliana (Mouse-ear cress).